The primary structure comprises 288 residues: MANSPTPTMLAFLALGLALLLSATGQASAQNCGCQSNMCCSKWGYCGTGKDYCGDGCRSGPCYGGGGGGGGGGGGGGGGGGGSGVSVESVVTEAFFNGIKNQAPNGCAGKNFYTRQSFLNAAHSYSGFARDRTNDDSKREIAAFFAHVTHETGHMCYINEINGASMDYCDKNNKQWPCQPGKKYYGRGPLQISWNYNYGPAGQNIGFDGLRDPDRVAQDPTISFKTALWFWMNNVHQVMLQGFGATIRAINGALECNGKNPGAVNARVNYYKDYCRQFGVDPGGNLYC.

An N-terminal signal peptide occupies residues 1 to 29; it reads MANSPTPTMLAFLALGLALLLSATGQASA. The 35-residue stretch at 30–64 folds into the Chitin-binding type-1 domain; that stretch reads QNCGCQSNMCCSKWGYCGTGKDYCGDGCRSGPCYG. Intrachain disulfides connect C32/C40, C34/C46, C39/C53, C57/C62, C107/C156, C169/C178, and C256/C288. The Proton donor role is filled by E151.

This sequence belongs to the glycosyl hydrolase 19 family. Chitinase class IV subfamily. Expressed in sheaths and meristems and at lower levels in roots and leaves.

It catalyses the reaction Random endo-hydrolysis of N-acetyl-beta-D-glucosaminide (1-&gt;4)-beta-linkages in chitin and chitodextrins.. In terms of biological role, may function in reproductive organs during embryogenesis and seed maturation. This chain is Chitinase 5 (Cht5), found in Oryza sativa subsp. japonica (Rice).